Consider the following 79-residue polypeptide: MLILSRKQDDSVIIGDDIEIKIISIDKGSVRLGFSAPENCVILRGELKEAITSQNKQASQSDDIKAVSEIKFLLKAHKK.

The protein belongs to the CsrA/RsmA family. As to quaternary structure, homodimer; the beta-strands of each monomer intercalate to form a hydrophobic core, while the alpha-helices form wings that extend away from the core.

Its subcellular location is the cytoplasm. Its function is as follows. A translational regulator that binds mRNA to regulate translation initiation and/or mRNA stability. Usually binds in the 5'-UTR at or near the Shine-Dalgarno sequence preventing ribosome-binding, thus repressing translation. Its main target seems to be the major flagellin gene, while its function is anatagonized by FliW. The protein is Translational regulator CsrA of Helicobacter hepaticus (strain ATCC 51449 / 3B1).